Reading from the N-terminus, the 261-residue chain is Ribonuclease PH (261 aa).

Residues Arg87 and 125-127 each bind phosphate; that span reads GTR.

The protein belongs to the RNase PH family. In terms of assembly, homohexameric ring arranged as a trimer of dimers.

The enzyme catalyses tRNA(n+1) + phosphate = tRNA(n) + a ribonucleoside 5'-diphosphate. In terms of biological role, phosphorolytic 3'-5' exoribonuclease that plays an important role in tRNA 3'-end maturation. Removes nucleotide residues following the 3'-CCA terminus of tRNAs; can also add nucleotides to the ends of RNA molecules by using nucleoside diphosphates as substrates, but this may not be physiologically important. Probably plays a role in initiation of 16S rRNA degradation (leading to ribosome degradation) during starvation. This chain is Ribonuclease PH, found in Thermoanaerobacter pseudethanolicus (strain ATCC 33223 / 39E) (Clostridium thermohydrosulfuricum).